We begin with the raw amino-acid sequence, 366 residues long: MNRVPVTTSSRTYDVLIGHEILRDAGKHIRVVLPKAKRAFVITSAPVRKHWAGIVTDALTAEGFEVIFLEMEDGERAKNMASVEDLALKMMAKGADRQSIICALGGGVVGDVAGFVASVFMRGIPVIQMPTTFLAQVDSSIGGKTGVNLKAGKNLVGTFYQPWLVLADPGVFSTLPEREFRSGLYESLKCGVIRRPDLFDRMERDRQRIVERDPGLIEWLITESVRVKADVVGADEHESGERRILNFGHTIGHALEAETAYKYFLHGEAVAWGMIAVTMIAAGLQRTDSATAQRIISLCLAYAPLPKIEVNAKKTANRVKGDKKTVHGVTHFILPREIGKVEVAIDVTDRAVVQAIEELKYLSFVG.

NAD(+) contacts are provided by residues 73–78 (DGERAK), 107–111 (GVVGD), 131–132 (TT), lysine 144, and lysine 153. Residues glutamate 186, histidine 249, and histidine 266 each contribute to the Zn(2+) site.

The protein belongs to the sugar phosphate cyclases superfamily. Dehydroquinate synthase family. The cofactor is Co(2+). Zn(2+) is required as a cofactor. Requires NAD(+) as cofactor.

It is found in the cytoplasm. It catalyses the reaction 7-phospho-2-dehydro-3-deoxy-D-arabino-heptonate = 3-dehydroquinate + phosphate. The protein operates within metabolic intermediate biosynthesis; chorismate biosynthesis; chorismate from D-erythrose 4-phosphate and phosphoenolpyruvate: step 2/7. In terms of biological role, catalyzes the conversion of 3-deoxy-D-arabino-heptulosonate 7-phosphate (DAHP) to dehydroquinate (DHQ). This is 3-dehydroquinate synthase from Koribacter versatilis (strain Ellin345).